A 457-amino-acid chain; its full sequence is V-type ATP synthase beta chain (457 aa).

It belongs to the ATPase alpha/beta chains family.

Produces ATP from ADP in the presence of a proton gradient across the membrane. The V-type beta chain is a regulatory subunit. This Clostridioides difficile (strain 630) (Peptoclostridium difficile) protein is V-type ATP synthase beta chain.